The primary structure comprises 122 residues: Succinate dehydrogenase assembly factor 3, mitochondrial (122 aa).

The N-terminal 47 residues, 1-47, are a transit peptide targeting the mitochondrion; sequence MHPSVVRLVKPRRPERITSPILPPLPLYRAILRAHHRKLPQELRYLG.

It belongs to the complex I LYR family. SDHAF3 subfamily. In terms of assembly, interacts with the iron-sulfur protein subunit within the SDH catalytic dimer.

The protein resides in the mitochondrion matrix. In terms of biological role, plays an essential role in the assembly of succinate dehydrogenase (SDH), an enzyme complex (also referred to as respiratory complex II) that is a component of both the tricarboxylic acid (TCA) cycle and the mitochondrial electron transport chain, and which couples the oxidation of succinate to fumarate with the reduction of ubiquinone (coenzyme Q) to ubiquinol. Promotes maturation of the iron-sulfur protein subunit of the SDH catalytic dimer, protecting it from the deleterious effects of oxidants. May act together with SDHAF1. In Candida albicans (strain SC5314 / ATCC MYA-2876) (Yeast), this protein is Succinate dehydrogenase assembly factor 3, mitochondrial.